A 290-amino-acid polypeptide reads, in one-letter code: 4-hydroxy-tetrahydrodipicolinate synthase (290 aa).

Pyruvate is bound at residue T45. Residue Y133 is the Proton donor/acceptor of the active site. K161 acts as the Schiff-base intermediate with substrate in catalysis. Residue I202 coordinates pyruvate.

Belongs to the DapA family. Homotetramer; dimer of dimers.

Its subcellular location is the cytoplasm. The catalysed reaction is L-aspartate 4-semialdehyde + pyruvate = (2S,4S)-4-hydroxy-2,3,4,5-tetrahydrodipicolinate + H2O + H(+). The protein operates within amino-acid biosynthesis; L-lysine biosynthesis via DAP pathway; (S)-tetrahydrodipicolinate from L-aspartate: step 3/4. In terms of biological role, catalyzes the condensation of (S)-aspartate-beta-semialdehyde [(S)-ASA] and pyruvate to 4-hydroxy-tetrahydrodipicolinate (HTPA). The polypeptide is 4-hydroxy-tetrahydrodipicolinate synthase (Alkalilimnicola ehrlichii (strain ATCC BAA-1101 / DSM 17681 / MLHE-1)).